The primary structure comprises 142 residues: Large ribosomal subunit protein uL13 (142 aa).

This sequence belongs to the universal ribosomal protein uL13 family. As to quaternary structure, part of the 50S ribosomal subunit.

Functionally, this protein is one of the early assembly proteins of the 50S ribosomal subunit, although it is not seen to bind rRNA by itself. It is important during the early stages of 50S assembly. This Haemophilus influenzae (strain 86-028NP) protein is Large ribosomal subunit protein uL13.